A 258-amino-acid chain; its full sequence is MNHCELEEVTQHINNKISMIKRLLELRAVAKDPDKRGTLLKIGQEVSAINELLDRFEKYVGKQRDLLKHLKDLEGFFQEDEQDAYHLKNNTPPHMPKRGQQAAPQGGGQVAVQSRQTDAPAAPQEQGPPRKTQRNQIKEMEFITVPEFDSIPPYMKGRVTYDQLNAAVQSINTAVTSKYKILHQPVKTLNNVSRSLQQRFKDQETKDTKGHFFVVEQDIKEFAQLKVDKRFVGMLNMLRHCQRLKEVRGGGLTRFILL.

A coiled-coil region spans residues 5 to 25 (ELEEVTQHINNKISMIKRLLE). Residues 86-136 (HLKNNTPPHMPKRGQQAAPQGGGQVAVQSRQTDAPAAPQEQGPPRKTQRNQ) form a disordered region. The microtubule binding stretch occupies residues 137–258 (IKEMEFITVP…GGGLTRFILL (122 aa)).

This sequence belongs to the SKA1 family. Component of the SKA complex, composed of ska1, ska2 and ska3.

Its subcellular location is the cytoplasm. It localises to the cytoskeleton. The protein localises to the spindle. The protein resides in the chromosome. It is found in the centromere. Its subcellular location is the kinetochore. Component of the SKA complex, a microtubule plus end-binding complex of the outer kinetochore that stabilizes spindle microtubule-kinetochore attachments, promotes alignment of chromosomes at the mitotic spindle equator (chromosome congression) and assists suppression of the spindle assembly checkpoint. Kinetochores, consisting of a centromere-associated inner segment and a microtubule-contacting outer segment, play a crucial role in chromosome segregation by mediating the physical connection between centromeric DNA and spindle microtubules. The outer kinetochore is made up of the ten-subunit KMN network complex, comprising the MIS12, NDC80 and KNL1 complexes, and auxiliary microtubule-associated components such as the SKA complex; together they connect the outer kinetochore with the inner kinetochore, bind microtubules, and mediate interactions with mitotic checkpoint proteins that delay anaphase until chromosomes are bioriented on the spindle. The SKA complex is loaded onto bioriented kinetochores and it facilitates chromosome congression by stabilizing microtubules together with MAPRE1, and end-on attachment of the NDC80 complex to depolymerizing spindle microtubules, thereby assisting the poleward-moving kinetochore in withstanding microtubule pulling forces. The complex associates with dynamic microtubule plus-ends and can track both depolymerizing and elongating microtubules. The complex recruits protein phosphatase 1 (PP1) to the kinetochore in prometaphase and metaphase, to oppose spindle assembly checkpoint signaling and promote the onset of anaphase. In the complex, it mediates interactions with microtubules. It also stimulates AURKB/Aurora B catalytic activity. During meiosis the SKA complex stabilizes the meiotic spindle and is required for its migration to the cortex. In Danio rerio (Zebrafish), this protein is SKA complex subunit 1 (ska1).